The following is a 1020-amino-acid chain: Carbamoyl phosphate synthase arginine-specific large chain (1020 aa).

The interval 1-401 (MPKNNAIHSI…ATLKAIASLE (401 aa)) is carboxyphosphate synthetic domain. Positions 129, 169, 175, 176, 208, 210, 215, 241, 242, 243, 284, and 298 each coordinate ATP. Residues 133 to 327 (KTLMKRLHQP…IAKIAADIAI (195 aa)) form the ATP-grasp 1 domain. Gln-284, Glu-298, and Asn-300 together coordinate Mg(2+). Gln-284, Glu-298, and Asn-300 together coordinate Mn(2+). 2 oligomerization domain regions span residues 402-542 (IDPK…FGQT) and 402-544 (IDPK…QTNE). 2 carbamoyl phosphate synthetic domain regions span residues 543-927 (NESH…ADSY) and 544-927 (ESHP…ADSY). Residues 669 to 858 (ADCLRLLKIA…LAQLATRLIL (190 aa)) form the ATP-grasp 2 domain. The ATP site is built by Arg-705, Gln-744, Leu-746, Glu-750, Gly-775, Val-776, His-777, Ser-778, and Gln-818. The Mg(2+) site is built by Gln-818 and Asn-831. Mn(2+) is bound by residues Gln-818 and Asn-831. An MGS-like domain is found at 927-1020 (YHLETWQTVD…LAVTPTPATI (94 aa)). Residues 928-1020 (HLETWQTVDG…LAVTPTPATI (93 aa)) form an allosteric domain region.

Belongs to the CarB family. As to quaternary structure, composed of two chains; the small (or glutamine) chain promotes the hydrolysis of glutamine to ammonia, which is used by the large (or ammonia) chain to synthesize carbamoyl phosphate. Tetramer of heterodimers (alpha,beta)4. Mg(2+) is required as a cofactor. Requires Mn(2+) as cofactor.

It catalyses the reaction hydrogencarbonate + L-glutamine + 2 ATP + H2O = carbamoyl phosphate + L-glutamate + 2 ADP + phosphate + 2 H(+). The catalysed reaction is hydrogencarbonate + NH4(+) + 2 ATP = carbamoyl phosphate + 2 ADP + phosphate + 2 H(+). It participates in amino-acid biosynthesis; L-arginine biosynthesis; carbamoyl phosphate from bicarbonate: step 1/1. Its function is as follows. Large subunit of the glutamine-dependent carbamoyl phosphate synthetase (CPSase). CPSase catalyzes the formation of carbamoyl phosphate from the ammonia moiety of glutamine, carbonate, and phosphate donated by ATP, constituting the first step of the biosynthetic pathway leading to arginine and/or urea. The large subunit (synthetase) binds the substrates ammonia (free or transferred from glutamine from the small subunit), hydrogencarbonate and ATP and carries out an ATP-coupled ligase reaction, activating hydrogencarbonate by forming carboxy phosphate which reacts with ammonia to form carbamoyl phosphate. The sequence is that of Carbamoyl phosphate synthase arginine-specific large chain from Lactiplantibacillus plantarum (strain ATCC BAA-793 / NCIMB 8826 / WCFS1) (Lactobacillus plantarum).